Consider the following 470-residue polypeptide: Argininosuccinate lyase (470 aa).

This sequence belongs to the lyase 1 family. Argininosuccinate lyase subfamily.

Its subcellular location is the cytoplasm. The catalysed reaction is 2-(N(omega)-L-arginino)succinate = fumarate + L-arginine. It functions in the pathway amino-acid biosynthesis; L-arginine biosynthesis; L-arginine from L-ornithine and carbamoyl phosphate: step 3/3. This chain is Argininosuccinate lyase, found in Leptospira interrogans serogroup Icterohaemorrhagiae serovar copenhageni (strain Fiocruz L1-130).